The sequence spans 144 residues: MNFKYIFAVSFLIASAYARSVQNDEQSLSQRDVLEEESLREIRGIGGKILSGLKTALKGAAKELASTYLHRKRTAEEHEEMKRLEAVMRDLDSLDYPEEASERETRGFNQDEIANLFTKKEKRILGPVLGLVSDTLDDVLGILG.

The signal sequence occupies residues 1–18 (MNFKYIFAVSFLIASAYA). 2 propeptides span residues 19 to 43 (RSVQ…REIR) and 74 to 123 (TAEE…KEKR). Leu-143 carries the leucine amide modification.

This sequence belongs to the bombinin family. Expressed by the skin glands.

The protein localises to the secreted. Maximin-3 shows antibacterial activity against both Gram-positive and Gram-negative bacteria. It also shows antimicrobial activity against the fungus C.albicans, but not against A.flavus nor P.uticale. It has little hemolytic activity. It possess a significant cytotoxicity against tumor cell lines. It possess a significant anti-HIV activity. It shows high spermicidal activity. Functionally, maximin-H5 shows antibacterial activity only against the Gram-positive bacteria S.aureus. The other bacterial and fungal strains tested were resistant to it. The presence of metal ions, like Zn(2+) and Mg(2+), did not increase its antimicrobial potency. Does not show hemolytic activity (in a concentration up to 80 uM). This Bombina maxima (Giant fire-bellied toad) protein is Maximins 3/H5.